We begin with the raw amino-acid sequence, 443 residues long: UDP-N-acetylmuramate--L-alanine ligase (443 aa).

An ATP-binding site is contributed by 110-116 (GAHGKTS).

This sequence belongs to the MurCDEF family.

The protein localises to the cytoplasm. It catalyses the reaction UDP-N-acetyl-alpha-D-muramate + L-alanine + ATP = UDP-N-acetyl-alpha-D-muramoyl-L-alanine + ADP + phosphate + H(+). Its pathway is cell wall biogenesis; peptidoglycan biosynthesis. Its function is as follows. Cell wall formation. This chain is UDP-N-acetylmuramate--L-alanine ligase, found in Streptococcus gordonii (strain Challis / ATCC 35105 / BCRC 15272 / CH1 / DL1 / V288).